A 175-amino-acid chain; its full sequence is 3-hydroxydecanoyl-[acyl-carrier-protein] dehydratase (175 aa).

His-71 is a catalytic residue.

Belongs to the thioester dehydratase family. FabA subfamily. In terms of assembly, homodimer.

It is found in the cytoplasm. It catalyses the reaction a (3R)-hydroxyacyl-[ACP] = a (2E)-enoyl-[ACP] + H2O. It carries out the reaction (3R)-hydroxydecanoyl-[ACP] = (2E)-decenoyl-[ACP] + H2O. The catalysed reaction is (2E)-decenoyl-[ACP] = (3Z)-decenoyl-[ACP]. The protein operates within lipid metabolism; fatty acid biosynthesis. In terms of biological role, necessary for the introduction of cis unsaturation into fatty acids. Catalyzes the dehydration of (3R)-3-hydroxydecanoyl-ACP to E-(2)-decenoyl-ACP and then its isomerization to Z-(3)-decenoyl-ACP. Can catalyze the dehydratase reaction for beta-hydroxyacyl-ACPs with saturated chain lengths up to 16:0, being most active on intermediate chain length. The protein is 3-hydroxydecanoyl-[acyl-carrier-protein] dehydratase of Rhodopseudomonas palustris (strain BisB5).